A 154-amino-acid polypeptide reads, in one-letter code: MSADTETASSRLALTVQRAIGAENRARSPTSALIRRWALAALRGDAEMTVRLVGEAEGRRLNRDYRGKDYATNVLTFVYDESERLAGDLVLCVPVVAREAAEQGKPLEAHFAHLIVHGMLHLQGFDHEAPDEAEEMETLETRVLATLGYPNPYA.

Positions 117, 121, and 127 each coordinate Zn(2+).

This sequence belongs to the endoribonuclease YbeY family. The cofactor is Zn(2+).

The protein localises to the cytoplasm. Functionally, single strand-specific metallo-endoribonuclease involved in late-stage 70S ribosome quality control and in maturation of the 3' terminus of the 16S rRNA. The chain is Endoribonuclease YbeY from Aromatoleum aromaticum (strain DSM 19018 / LMG 30748 / EbN1) (Azoarcus sp. (strain EbN1)).